We begin with the raw amino-acid sequence, 411 residues long: Arginine deiminase 1 (411 aa).

Cys-401 (amidino-cysteine intermediate) is an active-site residue.

Belongs to the arginine deiminase family.

It is found in the cytoplasm. The enzyme catalyses L-arginine + H2O = L-citrulline + NH4(+). The protein operates within amino-acid degradation; L-arginine degradation via ADI pathway; carbamoyl phosphate from L-arginine: step 1/2. In Staphylococcus epidermidis (strain ATCC 12228 / FDA PCI 1200), this protein is Arginine deiminase 1 (arcA1).